A 364-amino-acid chain; its full sequence is Abhydrolase domain-containing protein C57A10.08c (364 aa).

At 1-8 the chain is on the cytoplasmic side; sequence MYFFTISR. The chain crosses the membrane as a helical; Signal-anchor for type II membrane protein span at residues 9-29; sequence LTSFISYGILGALGILTFLYL. Residues 30–364 are Lumenal-facing; sequence YDAYLAKSFQ…DKFSTTDHNI (335 aa). Ser-183 serves as the catalytic Charge relay system. N-linked (GlcNAc...) asparagine glycosylation is present at Asn-326. The active-site Charge relay system is the His-336.

It belongs to the AB hydrolase superfamily.

It is found in the endoplasmic reticulum membrane. This is Abhydrolase domain-containing protein C57A10.08c from Schizosaccharomyces pombe (strain 972 / ATCC 24843) (Fission yeast).